The sequence spans 374 residues: tRNA-specific 2-thiouridylase MnmA (374 aa).

Residues 17 to 24 and Met-43 each bind ATP; that span reads GMSGGVDS. The segment at 103 to 105 is interaction with target base in tRNA; that stretch reads NPD. Residue Cys-108 is the Nucleophile of the active site. A disulfide bridge connects residues Cys-108 and Cys-204. Gly-132 provides a ligand contact to ATP. The interval 154 to 156 is interaction with tRNA; sequence KDQ. Cys-204 (cysteine persulfide intermediate) is an active-site residue. The segment at 316–317 is interaction with tRNA; that stretch reads RY.

It belongs to the MnmA/TRMU family.

It is found in the cytoplasm. It catalyses the reaction S-sulfanyl-L-cysteinyl-[protein] + uridine(34) in tRNA + AH2 + ATP = 2-thiouridine(34) in tRNA + L-cysteinyl-[protein] + A + AMP + diphosphate + H(+). In terms of biological role, catalyzes the 2-thiolation of uridine at the wobble position (U34) of tRNA, leading to the formation of s(2)U34. The protein is tRNA-specific 2-thiouridylase MnmA of Pseudomonas fluorescens (strain SBW25).